The sequence spans 112 residues: UPF0212 protein Mhun_0078 (112 aa).

The protein belongs to the UPF0212 family.

This is UPF0212 protein Mhun_0078 from Methanospirillum hungatei JF-1 (strain ATCC 27890 / DSM 864 / NBRC 100397 / JF-1).